Here is a 193-residue protein sequence, read N- to C-terminus: Dual-action ribosomal maturation protein DarP (193 aa).

Residues 1–10 show a composition bias toward basic and acidic residues; it reads MRGRDEDTGE. Disordered stretches follow at residues 1-20 and 171-193; these read MRGR…SQQR and QEQG…EDDE. Residues 181-193 are compositionally biased toward acidic residues; sequence GLEDGESALEDDE.

It belongs to the DarP family.

It is found in the cytoplasm. In terms of biological role, member of a network of 50S ribosomal subunit biogenesis factors which assembles along the 30S-50S interface, preventing incorrect 23S rRNA structures from forming. Promotes peptidyl transferase center (PTC) maturation. The sequence is that of Dual-action ribosomal maturation protein DarP from Xanthomonas oryzae pv. oryzae (strain KACC10331 / KXO85).